Consider the following 492-residue polypeptide: Probable ATP-citrate synthase subunit 2 (492 aa).

Ser24 carries the post-translational modification Phosphoserine.

It in the N-terminal section; belongs to the succinate/malate CoA ligase beta subunit family. The protein in the C-terminal section; belongs to the succinate/malate CoA ligase alpha subunit family. In terms of assembly, composed of two subunits.

It localises to the cytoplasm. Its subcellular location is the nucleus. It carries out the reaction oxaloacetate + acetyl-CoA + ADP + phosphate = citrate + ATP + CoA. ATP citrate-lyase is the primary enzyme responsible for the synthesis of cytosolic acetyl-CoA. Has a central role in de novo lipid synthesis. This Schizosaccharomyces pombe (strain 972 / ATCC 24843) (Fission yeast) protein is Probable ATP-citrate synthase subunit 2.